A 202-amino-acid chain; its full sequence is Putative transposon Tn552 DNA-invertase bin3 (202 aa).

The region spanning 1 to 143 is the Resolvase/invertase-type recombinase catalytic domain; the sequence is MIIGYARVSS…QGIQVAKEKG (143 aa). Ser9 serves as the catalytic O-(5'-phospho-DNA)-serine intermediate.

This sequence belongs to the site-specific recombinase resolvase family.

Potential DNA invertase. This chain is Putative transposon Tn552 DNA-invertase bin3 (bin3), found in Staphylococcus aureus.